We begin with the raw amino-acid sequence, 582 residues long: Inactive metallocarboxypeptidase ECM14 (582 aa).

An N-terminal signal peptide occupies residues 1-20 (MHILQVITGATLVSVPFVSA). The propeptide occupies 21 to 172 (IPSSTSEFLP…QAVYESYPQP (152 aa)). The region spanning 200–522 (DYQPLSVIIP…NAVLVFGQFL (323 aa)) is the Peptidase M14 domain. 2 residues coordinate Zn(2+): His-265 and Glu-268. Residues 265 to 268 (HARE), Arg-323, and 340 to 341 (DR) each bind substrate. Cys-334 and Cys-357 are oxidised to a cystine. Asn-381 and Asn-387 each carry an N-linked (GlcNAc...) asparagine glycan. Zn(2+) is bound at residue His-397. Substrate is bound at residue 398–399 (SY). Positions 561 to 571 (SNQLEDDDNEN) are enriched in acidic residues. Residues 561 to 582 (SNQLEDDDNENDTLLGFRTQKV) are disordered. The N-linked (GlcNAc...) asparagine glycan is linked to Asn-571.

Belongs to the peptidase M14 family. The cofactor is Zn(2+).

Its subcellular location is the vacuole. It is found in the secreted. In terms of biological role, inactive carboxypeptidase that may play a role in cell wall organization and biogenesis. The protein is Inactive metallocarboxypeptidase ECM14 (ECM14) of Coccidioides posadasii (strain RMSCC 757 / Silveira) (Valley fever fungus).